Reading from the N-terminus, the 455-residue chain is Succinyl-CoA--L-malate CoA-transferase alpha subunit (455 aa).

The disordered stretch occupies residues 1-58 (MAKASRLTRSTGQPTEVSEGQVTGTSEMPPTGEEPSGHAESKPPASDPMSTPGTGQEQ). Polar residues-rich tracts occupy residues 7-28 (LTRS…TSEM) and 48-58 (PMSTPGTGQEQ). D227 serves as the catalytic Nucleophile.

Belongs to the CoA-transferase III family. As to quaternary structure, forms a large complex composed of six heterodimers (alpha, beta).

It carries out the reaction succinyl-CoA + (S)-malate = (S)-malyl-CoA + succinate. The catalysed reaction is (3S)-citramalate + succinyl-CoA = (3S)-citramalyl-CoA + succinate. In terms of biological role, involved in the 3-hydroxypropionate cycle used for autotrophic carbon dioxide fixation. Catalyzes the transfer of CoA moiety from succinyl-CoA to L-malate to yield L-malyl-CoA. In Chloroflexus aurantiacus (strain ATCC 29366 / DSM 635 / J-10-fl), this protein is Succinyl-CoA--L-malate CoA-transferase alpha subunit (smtA).